The chain runs to 255 residues: 6-phosphogluconolactonase 4 (255 aa).

This sequence belongs to the glucosamine/galactosamine-6-phosphate isomerase family. 6-phosphogluconolactonase subfamily.

It is found in the cytoplasm. The catalysed reaction is 6-phospho-D-glucono-1,5-lactone + H2O = 6-phospho-D-gluconate + H(+). It participates in carbohydrate degradation; pentose phosphate pathway; D-ribulose 5-phosphate from D-glucose 6-phosphate (oxidative stage): step 2/3. Its function is as follows. Involved in the pentose phosphate pathway via hydrolysis of 6-phosphogluconolactone to 6-phosphogluconate. The chain is 6-phosphogluconolactonase 4 from Saccharomyces cerevisiae (strain ATCC 204508 / S288c) (Baker's yeast).